Reading from the N-terminus, the 555-residue chain is Glutamine--tRNA ligase (555 aa).

Positions 35 to 45 (PEPNGYLHIGH) match the 'HIGH' region motif. Residues 36–38 (EPN) and 42–48 (HIGHAKS) each bind ATP. L-glutamine contacts are provided by Asp-68 and Tyr-213. Residues Thr-232, 262-263 (RL), and 270-272 (MSK) contribute to the ATP site. The 'KMSKS' region motif lies at 269–273 (VMSKR).

This sequence belongs to the class-I aminoacyl-tRNA synthetase family. Monomer.

Its subcellular location is the cytoplasm. It catalyses the reaction tRNA(Gln) + L-glutamine + ATP = L-glutaminyl-tRNA(Gln) + AMP + diphosphate. In Photobacterium profundum (strain SS9), this protein is Glutamine--tRNA ligase.